A 38-amino-acid chain; its full sequence is Large ribosomal subunit protein bL36 (38 aa).

This sequence belongs to the bacterial ribosomal protein bL36 family.

The chain is Large ribosomal subunit protein bL36 from Chlorobium limicola (strain DSM 245 / NBRC 103803 / 6330).